We begin with the raw amino-acid sequence, 256 residues long: 5'-nucleotidase SurE (256 aa).

Residues Asp-8, Asp-9, Ser-39, and Asn-95 each contribute to the a divalent metal cation site.

This sequence belongs to the SurE nucleotidase family. A divalent metal cation serves as cofactor.

The protein resides in the cytoplasm. The catalysed reaction is a ribonucleoside 5'-phosphate + H2O = a ribonucleoside + phosphate. Its function is as follows. Nucleotidase that shows phosphatase activity on nucleoside 5'-monophosphates. In Methanosphaera stadtmanae (strain ATCC 43021 / DSM 3091 / JCM 11832 / MCB-3), this protein is 5'-nucleotidase SurE.